A 148-amino-acid chain; its full sequence is UPF0758 protein YeeS (148 aa).

The MPN domain maps to 26-148 (AFTSTRAARE…VFSFAEHGLL (123 aa)). Zn(2+) contacts are provided by histidine 97, histidine 99, and aspartate 110. A JAMM motif motif is present at residues 97-110 (HNHPSGEVTPSKAD).

Belongs to the UPF0758 family.

This is UPF0758 protein YeeS (yeeS) from Escherichia coli (strain K12).